The chain runs to 488 residues: Envelope glycoprotein gp62 (488 aa).

The signal sequence occupies residues methionine 1–glycine 20. Residues aspartate 21–alanine 442 are Extracellular-facing. Residues asparagine 140 and asparagine 222 are each glycosylated (N-linked (GlcNAc...) asparagine; by host). The CXXC signature appears at cysteine 225 to cysteine 228. 3 cysteine pairs are disulfide-bonded: cysteine 225/cysteine 228, cysteine 225/cysteine 401, and cysteine 393/cysteine 400. Asparagine 244 and asparagine 272 each carry an N-linked (GlcNAc...) asparagine; by host glycan. The segment at alanine 313–glycine 333 is fusion peptide. Coiled-coil stretches lie at residues alanine 341 to tryptophan 387 and glutamine 397 to leucine 429. The tract at residues alanine 376–leucine 392 is immunosuppression. The short motif at cysteine 393–cysteine 401 is the CX6CC element. N-linked (GlcNAc...) asparagine; by host glycosylation occurs at asparagine 404. A helical membrane pass occupies residues leucine 443–isoleucine 463. Cysteine 462 carries the S-palmitoyl cysteine; by host lipid modification. The Cytoplasmic portion of the chain corresponds to leucine 464–leucine 488.

As to quaternary structure, the mature envelope protein (Env) consists of a trimer of SU-TM heterodimers attached by a labile interchain disulfide bond. In terms of processing, specific enzymatic cleavages in vivo yield mature proteins. Envelope glycoproteins are synthesized as an inactive precursor that is N-glycosylated and processed likely by host cell furin or by a furin-like protease in the Golgi to yield the mature SU and TM proteins. The cleavage site between SU and TM requires the minimal sequence [KR]-X-[KR]-R. Post-translationally, the CXXC motif is highly conserved across a broad range of retroviral envelope proteins. It is thought to participate in the formation of a labile disulfide bond possibly with the CX6CC motif present in the transmembrane protein. Isomerization of the intersubunit disulfide bond to an SU intrachain disulfide bond is thought to occur upon receptor recognition in order to allow membrane fusion. The transmembrane protein is palmitoylated.

It localises to the virion membrane. The protein localises to the host cell membrane. Functionally, the surface protein (SU) attaches the virus to the host cell by binding to its receptor. This interaction triggers the refolding of the transmembrane protein (TM) and is thought to activate its fusogenic potential by unmasking its fusion peptide. Fusion occurs at the host cell plasma membrane. Its function is as follows. The transmembrane protein (TM) acts as a class I viral fusion protein. Under the current model, the protein has at least 3 conformational states: pre-fusion native state, pre-hairpin intermediate state, and post-fusion hairpin state. During viral and target cell membrane fusion, the coiled coil regions (heptad repeats) assume a trimer-of-hairpins structure, positioning the fusion peptide in close proximity to the C-terminal region of the ectodomain. The formation of this structure appears to drive apposition and subsequent fusion of viral and target cell membranes. Membranes fusion leads to delivery of the nucleocapsid into the cytoplasm. This is Envelope glycoprotein gp62 (env) from Human T-cell leukemia virus 1 (isolate Caribbea CH subtype A) (HTLV-1).